The sequence spans 432 residues: DEAD-box ATP-dependent RNA helicase 56 (432 aa).

A coiled-coil region spans residues 1-28; the sequence is MAEAEVKDNEVYEEDLVDYEEEVENGTD. The Q motif motif lies at 51–79; that stretch reads SGFRDFLLKPELLRAIQDCGFEHPSEVQH. Residues 82-255 enclose the Helicase ATP-binding domain; the sequence is IPQAILGMDV…KKFMQDPMEI (174 aa). Residue 95–102 participates in ATP binding; sequence AKSGMGKT. The short motif at 202–205 is the DEAD box element; it reads DECD. A Helicase C-terminal domain is found at 283-428; the sequence is KLNDLLDALD…ELPEQIDTST (146 aa).

It belongs to the DEAD box helicase family. DECD subfamily. In terms of assembly, homodimer and heterodimer with AIP2. Interacts with API5.

The protein resides in the nucleus. The enzyme catalyses ATP + H2O = ADP + phosphate + H(+). In terms of biological role, ATP-binding RNA helicase involved in pre-mRNA splicing. Required for the export of mRNA out of the nucleus. Required for tapetal programmed cell death (PCD) and degeneration during anther development. Forms dimer with AIP2 and binds the promoter region of the cysteine protease CP1. Can complement the yeast RNA helicase SUB2. Plants silencing AIP1 and AIP2 are male sterile. This chain is DEAD-box ATP-dependent RNA helicase 56, found in Oryza sativa subsp. japonica (Rice).